The sequence spans 158 residues: Transcription elongation factor GreB (158 aa).

Positions 53 to 75 form a coiled coil; sequence KRRLREIDRRVRFLTKRLEVLQI.

This sequence belongs to the GreA/GreB family. GreB subfamily.

Its function is as follows. Necessary for efficient RNA polymerase transcription elongation past template-encoded arresting sites. The arresting sites in DNA have the property of trapping a certain fraction of elongating RNA polymerases that pass through, resulting in locked ternary complexes. Cleavage of the nascent transcript by cleavage factors such as GreA or GreB allows the resumption of elongation from the new 3'terminus. GreB releases sequences of up to 9 nucleotides in length. The polypeptide is Transcription elongation factor GreB (Pasteurella multocida (strain Pm70)).